Here is a 132-residue protein sequence, read N- to C-terminus: Translation initiation factor 5A (132 aa).

Lys-37 is subject to Hypusine.

Belongs to the eIF-5A family.

The protein resides in the cytoplasm. In terms of biological role, functions by promoting the formation of the first peptide bond. The protein is Translation initiation factor 5A (eif5a) of Methanocaldococcus jannaschii (strain ATCC 43067 / DSM 2661 / JAL-1 / JCM 10045 / NBRC 100440) (Methanococcus jannaschii).